Reading from the N-terminus, the 205-residue chain is Basonuclin zinc finger protein homolog (205 aa).

2 consecutive C2H2-type zinc fingers follow at residues 107–130 (VACD…SAVH) and 135–164 (HTCT…PKLH). The tract at residues 145 to 168 (QFSSRRSRNRHSSNNNPKLHMPES) is disordered.

As to expression, expressed in the VA and VB motor neurons and at lower levels in the SABV neuron pair.

It is found in the nucleus. In terms of biological role, probable transcription factor. Involved in motor neuron fate determination and maintenance, acting as a transcriptional repressor to counteract gene activation by transcription factor unc-3 in a subset of motor neurons. Required throughout development to repress transcription by unc-3, probably acting by binding to specific promoter elements. Represses expression of DA and DB motor neuron-specific effector genes, such as unc-129 and unc-53, in VA and VB motor neurons. The protein is Basonuclin zinc finger protein homolog of Caenorhabditis elegans.